The primary structure comprises 412 residues: Alanyl-tRNA editing protein Aarsd1 (412 aa).

Zn(2+)-binding residues include H109 and H113. S174 carries the phosphoserine modification. Residues C209 and H213 each contribute to the Zn(2+) site.

The protein belongs to the class-II aminoacyl-tRNA synthetase family. Alax-L subfamily. It depends on Zn(2+) as a cofactor.

Its subcellular location is the cytoplasm. In terms of biological role, functions in trans to edit the amino acid moiety from incorrectly charged tRNA(Ala). The sequence is that of Alanyl-tRNA editing protein Aarsd1 (AARSD1) from Homo sapiens (Human).